The chain runs to 305 residues: Alpha-N-acetylgalactosaminide alpha-2,6-sialyltransferase 3 (305 aa).

At Met-1–Lys-8 the chain is on the cytoplasmic side. A helical; Signal-anchor for type II membrane protein membrane pass occupies residues Pro-9–Val-28. Topologically, residues Asn-29 to Ser-305 are lumenal. Cys-80 and Cys-229 are joined by a disulfide. Residues Asn-239 and Asn-301 are each glycosylated (N-linked (GlcNAc...) asparagine).

This sequence belongs to the glycosyltransferase 29 family. As to expression, in adult tissues, high expression in brain, lung and heart and to a lesser extent in kidney, mammary gland, spleen, testis and thymus.

The protein localises to the golgi apparatus membrane. It catalyses the reaction an alpha-Neu5Ac-(2-&gt;3)-beta-D-Gal-(1-&gt;3)-D-GlcNAc derivative + CMP-N-acetyl-beta-neuraminate = an alpha-Neu5Ac-(2-&gt;3)-beta-D-Gal-(1-&gt;3)-[alpha-Neu5Ac-(2-&gt;6)]-D-GlcNAc derivative + CMP + H(+). The catalysed reaction is a ganglioside GM1b (d18:1(4E)) + CMP-N-acetyl-beta-neuraminate = a ganglioside GD1alpha (d18:1(4E)) + CMP + H(+). It carries out the reaction a globoside MSGG + CMP-N-acetyl-beta-neuraminate = a globoside DSGG + CMP + H(+). The enzyme catalyses 3-O-[alpha-Neu5Ac-(2-&gt;3)-beta-D-Gal-(1-&gt;3)-alpha-D-GalNAc]-L-Ser-[protein] + CMP-N-acetyl-beta-neuraminate = a 3-O-{alpha-Neu5Ac-(2-&gt;3)-beta-D-Gal-(1-&gt;3)-[alpha-Neu5Ac-(2-&gt;6)]-alpha-D-GalNAc}-L-seryl-[protein] + CMP + H(+). It catalyses the reaction 3-O-[alpha-Neu5Ac-(2-&gt;3)-beta-D-Gal-(1-&gt;3)-alpha-D-GalNAc]-L-Thr-[protein] + CMP-N-acetyl-beta-neuraminate = a 3-O-{alpha-Neu5Ac-(2-&gt;3)-beta-D-Gal-(1-&gt;3)-[alpha-Neu5Ac-(2-&gt;6)]-alpha-D-GalNAc}-L-threonyl-[protein] + CMP + H(+). It participates in protein modification; protein glycosylation. The protein operates within glycolipid biosynthesis. Transfers the sialyl group (N-acetyl-alpha-neuraminyl or NeuAc) from CMP-NeuAc to the GalNAc residue on the NeuAc-alpha-2,3-Gal-beta-1,3-GalNAc sequence of glycoproteins and glycolipids forming an alpha-2,6-linkage. Produces branched type disialyl structures by transfer of a sialyl group onto a GalNAc residue inside the backbone core chains. ST6GalNAcIII prefers glycolipids to glycoproteins, predominantly catalyzing the biosynthesis of ganglioside GD1alpha from GM1b. GD1alpha is a critical molecule in the communication and interaction between neuronal cells and their supportive cells, particularly in brain tissues, and functions as an adhesion molecule in the process of metastasis. Sialylation of glycoproteins or glycosphingolipids is very important in tumor development, neuronal development, nerve repair, immunological processes and regulation of hormone sensitivity. This Mus musculus (Mouse) protein is Alpha-N-acetylgalactosaminide alpha-2,6-sialyltransferase 3 (St6galnac3).